Reading from the N-terminus, the 433-residue chain is Ribulose bisphosphate carboxylase/oxygenase activase, chloroplastic (433 aa).

Positions Met-1–Ser-20 are enriched in polar residues. The transit peptide at Met-1–Ala-53 directs the protein to the chloroplast. The segment at Met-1 to Lys-60 is disordered. Residue Gly-161–Ser-168 coordinates ATP.

This sequence belongs to the RuBisCO activase family.

It localises to the plastid. The protein localises to the chloroplast stroma. Activation of RuBisCO (ribulose-1,5-bisphosphate carboxylase/oxygenase; EC 4.1.1.39) involves the ATP-dependent carboxylation of the epsilon-amino group of lysine leading to a carbamate structure. The sequence is that of Ribulose bisphosphate carboxylase/oxygenase activase, chloroplastic (RCA1) from Zea mays (Maize).